The chain runs to 283 residues: Vitamin K epoxide reductase homolog (283 aa).

Residues 1–20 (MASYLKLKAQEETWLQRHSR) lie on the Cytoplasmic side of the membrane. Residues 21-41 (LILAILAGLGSLLTAYLTYTK) traverse the membrane as a helical segment. At 42-66 (LTEQPAAFCTGDGGCDLVLSSRWAE) the chain is on the periplasmic side. A disulfide bridge links Cys-50 with Cys-56. 59–65 (VLSSRWA) contacts a quinone. The chain crosses the membrane as a helical span at residues 67 to 87 (FLGIPTAAVGLLGFLGVLALA). Residues 88–102 (VLPDGLPLVKRWRWP) lie on the Cytoplasmic side of the membrane. A helical transmembrane segment spans residues 103–123 (ALFGLVSAMTAFEMYMLYLMV). Position 111–122 (111–122 (MTAFEMYMLYLM)) interacts with a quinone. At 124–128 (AVLRQ) the chain is on the periplasmic side. A helical transmembrane segment spans residues 129–149 (FCMYCTTAIILVAGLGLVTVL). Cys-130 and Cys-133 are oxidised to a cystine. The Cytoplasmic portion of the chain corresponds to 150-158 (GHRWLDGGK). The chain crosses the membrane as a helical span at residues 159–179 (LAFSYILVAFLTLVTTIGVYA). At 180-283 (NQVPPPSPLA…ASGYPLEEGR (104 aa)) the chain is on the periplasmic side. Positions 186–283 (SPLAVGLAAH…ASGYPLEEGR (98 aa)) are thioredoxin-like domain. 2 disulfides stabilise this stretch: Cys-209-Cys-212 and Cys-231-Cys-244.

This sequence belongs to the VKOR family.

The protein localises to the membrane. Its activity is regulated as follows. Inhibited by ferulenol. Thiol-disulfide oxidoreductase that catalyzes vitamin K-dependent disulfide bond formation in periplasmic target proteins. The polypeptide is Vitamin K epoxide reductase homolog (Synechococcus sp. (strain JA-2-3B'a(2-13)) (Cyanobacteria bacterium Yellowstone B-Prime)).